A 326-amino-acid chain; its full sequence is 5,10-methylenetetrahydromethanopterin reductase (326 aa).

The protein belongs to the mer family.

It is found in the cytoplasm. The enzyme catalyses 5-methyl-5,6,7,8-tetrahydromethanopterin + oxidized coenzyme F420-(gamma-L-Glu)(n) + H(+) = 5,10-methylenetetrahydromethanopterin + reduced coenzyme F420-(gamma-L-Glu)(n). The protein operates within one-carbon metabolism; methanogenesis from CO(2); methyl-coenzyme M from 5,10-methylene-5,6,7,8-tetrahydromethanopterin: step 1/2. Its function is as follows. Catalyzes the reversible reduction of methylene-H(4)MPT to methyl-H(4)MPT. The protein is 5,10-methylenetetrahydromethanopterin reductase of Methanolobus tindarius.